The chain runs to 69 residues: Small ribosomal subunit protein uS14 (69 aa).

Residues Cys-33, Cys-36, Cys-51, and Cys-54 each coordinate Zn(2+).

It belongs to the universal ribosomal protein uS14 family. Zinc-binding uS14 subfamily. In terms of assembly, part of the 30S ribosomal subunit. Requires Zn(2+) as cofactor.

Binds 16S rRNA, required for the assembly of 30S particles. The chain is Small ribosomal subunit protein uS14 from Nanoarchaeum equitans (strain Kin4-M).